Here is a 552-residue protein sequence, read N- to C-terminus: Steroid transmembrane transporter SLC22A24 (552 aa).

12 consecutive transmembrane segments (helical) span residues 16-36 (FQIL…THIL), 144-164 (LKSV…LMFG), 175-197 (IYTW…PTFV), 201-220 (IFRF…AFIL), 232-252 (IGIT…GGLA), 255-275 (IRDW…LSLL), 349-369 (IICF…GLIL), 371-391 (LQDL…ITFI), 407-427 (INQS…TFLS), 435-455 (VVLA…FFVH), 474-494 (VFSR…VYSP), and 496-516 (LPWV…FCLP).

This sequence belongs to the major facilitator (TC 2.A.1) superfamily. Organic cation transporter (TC 2.A.1.19) family.

The protein resides in the cell membrane. The catalysed reaction is estrone 3-sulfate(out) + glutarate(in) = estrone 3-sulfate(in) + glutarate(out). It catalyses the reaction 17beta-estradiol 17-O-(beta-D-glucuronate)(out) + glutarate(in) = 17beta-estradiol 17-O-(beta-D-glucuronate)(in) + glutarate(out). The enzyme catalyses taurocholate(out) + glutarate(in) = taurocholate(in) + glutarate(out). It carries out the reaction 5alpha-androstane-3alpha,17beta-diol 3-O-(beta-D-glucuronate)(out) + glutarate(in) = 5alpha-androstane-3alpha,17beta-diol 3-O-(beta-D-glucuronate)(in) + glutarate(out). The catalysed reaction is glycocholate(out) + glutarate(in) = glycocholate(in) + glutarate(out). It catalyses the reaction dehydroepiandrosterone 3-sulfate(out) + glutarate(in) = dehydroepiandrosterone 3-sulfate(in) + glutarate(out). The enzyme catalyses glutarate(in) + succinate(out) = glutarate(out) + succinate(in). Renal transmembrane organic anion/dicarboxylate exchanger that participates in the reabsorption of conjugated steroids, as well as bile acids, driven by an outward gradient of dicarboxylates such as glutarate or succinate. Transports androstanediol glucuronide (5alpha-androstane-3alpha,17beta-diol 3-O-(beta-D-glucuronate)), estrone 3-sulfate, and estradiol-17-glucuronide (17beta-estradiol 17-O-(beta-D-glucuronate)), and taurocholate. This is Steroid transmembrane transporter SLC22A24 from Oryctolagus cuniculus (Rabbit).